The primary structure comprises 260 residues: F-actin-capping protein subunit beta (260 aa).

The protein belongs to the F-actin-capping protein beta subunit family. As to quaternary structure, component of the F-actin capping complex, composed of a heterodimer of an alpha and a beta subunit.

The protein localises to the cytoplasm. It localises to the cytoskeleton. Its subcellular location is the actin patch. Functionally, F-actin-capping proteins bind in a Ca(2+)-independent manner to the fast growing ends of actin filaments (barbed end) thereby blocking the exchange of subunits at these ends. Unlike other capping proteins (such as gelsolin and severin), these proteins do not sever actin filaments. In Yarrowia lipolytica (strain CLIB 122 / E 150) (Yeast), this protein is F-actin-capping protein subunit beta (CAP2).